We begin with the raw amino-acid sequence, 454 residues long: F-box protein At1g67130 (454 aa).

Positions 4 to 53 (GETLDSIPTDLILDILSRLPTKSIARFHCVSKLWSSMLASQDFTRLFVNR) constitute an F-box domain.

The protein is F-box protein At1g67130 of Arabidopsis thaliana (Mouse-ear cress).